We begin with the raw amino-acid sequence, 51 residues long: Large ribosomal subunit protein eL39z (51 aa).

It belongs to the eukaryotic ribosomal protein eL39 family.

This is Large ribosomal subunit protein eL39z (RPL39A) from Oryza sativa subsp. japonica (Rice).